A 185-amino-acid polypeptide reads, in one-letter code: Ribosome-recycling factor (185 aa).

A compositionally biased stretch (basic and acidic residues) spans Ile142 to Thr164. Residues Ile142–Asp173 form a disordered region.

It belongs to the RRF family.

It is found in the cytoplasm. Responsible for the release of ribosomes from messenger RNA at the termination of protein biosynthesis. May increase the efficiency of translation by recycling ribosomes from one round of translation to another. The sequence is that of Ribosome-recycling factor from Mycolicibacterium gilvum (strain PYR-GCK) (Mycobacterium gilvum (strain PYR-GCK)).